Here is a 387-residue protein sequence, read N- to C-terminus: MRKHFVLFSFPFLLLSSMLIFYQTTVFRNQLNEENDYTGGPIVPFMKRSLALHYQTCESFLNSLNTTVPVLLIDVDVLKMLDENACNLPTGRPTKIGVDVKYLSATWLLQDSRFEIVYYTNDTEKDFLDFRSEPRKIIPKKFSTCWVENLAVPADIKLFVEFWKRAKFVNCMNLHIPRAGSKVRMPARPSSEVLSRLRDELIENRMFPFLNGGTLLGWYRECSVIPHTLDMDISVFAEDFNLNFVEQMEQNLSDFRIKRKFGMTNDSFELTLAPKTGFKVFIDVFLMYKGVENGSVTHHWVGGVAPDGTKYKYSYPVYDPFCAADLHGHIFWVTCTPNEKIVKEYGQLWYLDHLTSKYSWNSSGKNVKKNGKWTKEQMKMVYKVFKR.

Residues 5–25 (FVLFSFPFLLLSSMLIFYQTT) traverse the membrane as a helical segment.

Belongs to the LicD transferase family.

The protein resides in the membrane. This is an uncharacterized protein from Caenorhabditis elegans.